The sequence spans 725 residues: Glyoxysomal fatty acid beta-oxidation multifunctional protein MFP-a (725 aa).

It in the N-terminal section; belongs to the enoyl-CoA hydratase/isomerase family. The protein in the central section; belongs to the 3-hydroxyacyl-CoA dehydrogenase family.

It is found in the glyoxysome. It carries out the reaction a (3S)-3-hydroxyacyl-CoA = a (2E)-enoyl-CoA + H2O. The enzyme catalyses a 4-saturated-(3S)-3-hydroxyacyl-CoA = a (3E)-enoyl-CoA + H2O. The catalysed reaction is a (3Z)-enoyl-CoA = a 4-saturated (2E)-enoyl-CoA. It catalyses the reaction a (3E)-enoyl-CoA = a 4-saturated (2E)-enoyl-CoA. It carries out the reaction (3S)-3-hydroxybutanoyl-CoA = (3R)-3-hydroxybutanoyl-CoA. The enzyme catalyses a (3S)-3-hydroxyacyl-CoA + NAD(+) = a 3-oxoacyl-CoA + NADH + H(+). Its pathway is lipid metabolism; fatty acid beta-oxidation. This chain is Glyoxysomal fatty acid beta-oxidation multifunctional protein MFP-a, found in Cucumis sativus (Cucumber).